Here is a 215-residue protein sequence, read N- to C-terminus: UPF0502 protein YceH (215 aa).

N6-acetyllysine is present on Lys-80.

The protein belongs to the UPF0502 family.

The sequence is that of UPF0502 protein YceH from Escherichia coli O157:H7.